The sequence spans 1275 residues: O-antigen biosynthesis protein RfbC (1275 aa).

Its function is as follows. Involved in O-antigen biosynthesis. In Myxococcus xanthus, this protein is O-antigen biosynthesis protein RfbC (rfbC).